We begin with the raw amino-acid sequence, 1193 residues long: DNA-directed RNA polymerase subunit beta (1193 aa).

Over residues 1149–1162 (EEEIEMRDLEDEED) the composition is skewed to acidic residues. Positions 1149 to 1193 (EEEIEMRDLEDEEDAKQADGLALSGDEEPEETASADVERDVVTKE) are disordered. Residues 1184–1193 (DVERDVVTKE) are compositionally biased toward basic and acidic residues.

This sequence belongs to the RNA polymerase beta chain family. In terms of assembly, RNAP is composed of a core of 2 alpha, a beta and a beta' subunit. The core is associated with a delta subunit, and at least one of epsilon or omega. When a sigma factor is associated with the core the holoenzyme is formed, which can initiate transcription.

It catalyses the reaction RNA(n) + a ribonucleoside 5'-triphosphate = RNA(n+1) + diphosphate. DNA-dependent RNA polymerase catalyzes the transcription of DNA into RNA using the four ribonucleoside triphosphates as substrates. The chain is DNA-directed RNA polymerase subunit beta from Bacillus subtilis (strain 168).